We begin with the raw amino-acid sequence, 243 residues long: rRNA adenine N-6-methyltransferase (243 aa).

S-adenosyl-L-methionine contacts are provided by Asn-11, Ile-13, Gly-38, Glu-59, Asp-84, and Asn-101.

This sequence belongs to the class I-like SAM-binding methyltransferase superfamily. rRNA adenine N(6)-methyltransferase family.

It catalyses the reaction adenosine(2085) in 23S rRNA + 2 S-adenosyl-L-methionine = N(6)-dimethyladenosine(2085) in 23S rRNA + 2 S-adenosyl-L-homocysteine + 2 H(+). In terms of biological role, this protein produces a dimethylation of the adenine residue at position 2085 in 23S rRNA, resulting in reduced affinity between ribosomes and macrolide-lincosamide-streptogramin B antibiotics. The polypeptide is rRNA adenine N-6-methyltransferase (ermA1) (Staphylococcus aureus (strain Mu50 / ATCC 700699)).